Reading from the N-terminus, the 354-residue chain is UDP-N-acetylglucosamine--N-acetylmuramyl-(pentapeptide) pyrophosphoryl-undecaprenol N-acetylglucosamine transferase (354 aa).

Residues 13-15, Asn125, Ser189, Ile242, 261-266, and Gln286 contribute to the UDP-N-acetyl-alpha-D-glucosamine site; these read SGG and ALTVSE.

It belongs to the glycosyltransferase 28 family. MurG subfamily.

The protein resides in the cell inner membrane. It catalyses the reaction di-trans,octa-cis-undecaprenyl diphospho-N-acetyl-alpha-D-muramoyl-L-alanyl-D-glutamyl-meso-2,6-diaminopimeloyl-D-alanyl-D-alanine + UDP-N-acetyl-alpha-D-glucosamine = di-trans,octa-cis-undecaprenyl diphospho-[N-acetyl-alpha-D-glucosaminyl-(1-&gt;4)]-N-acetyl-alpha-D-muramoyl-L-alanyl-D-glutamyl-meso-2,6-diaminopimeloyl-D-alanyl-D-alanine + UDP + H(+). The protein operates within cell wall biogenesis; peptidoglycan biosynthesis. Cell wall formation. Catalyzes the transfer of a GlcNAc subunit on undecaprenyl-pyrophosphoryl-MurNAc-pentapeptide (lipid intermediate I) to form undecaprenyl-pyrophosphoryl-MurNAc-(pentapeptide)GlcNAc (lipid intermediate II). The sequence is that of UDP-N-acetylglucosamine--N-acetylmuramyl-(pentapeptide) pyrophosphoryl-undecaprenol N-acetylglucosamine transferase from Buchnera aphidicola subsp. Acyrthosiphon pisum (strain APS) (Acyrthosiphon pisum symbiotic bacterium).